Consider the following 102-residue polypeptide: Small ribosomal subunit protein eS24 (102 aa).

The interval 70-102 (VYDSPAQAAEVEHDHMLERNKIGADDADAEEAE) is disordered. Residues 79–93 (EVEHDHMLERNKIGA) are compositionally biased toward basic and acidic residues.

The protein belongs to the eukaryotic ribosomal protein eS24 family.

In Halobacterium salinarum (strain ATCC 29341 / DSM 671 / R1), this protein is Small ribosomal subunit protein eS24.